Reading from the N-terminus, the 112-residue chain is Putative RNase TTE0752 (112 aa).

Active-site residues include Arg74 and His79. Positions 74–81 (RDKLIHEY) match the RX(4)HXY motif motif. An O-di-AMP-tyrosine modification is found at Tyr81.

It belongs to the HepT RNase toxin family. In terms of assembly, homodimer, probably forms a complex with cognate antitoxin TTE0751. In terms of processing, modified by cognate antitoxin TTE0751; probably at least 2 successive AMPylation events occur on Tyr-81.

Its function is as follows. Probable toxic component of a putative type VII toxin-antitoxin (TA) system, probably an RNase. Probably neutralized by cognate antitoxin TTE0751. Neutralization may be due to AMPylation by TTE0751. The chain is Putative RNase TTE0752 from Caldanaerobacter subterraneus subsp. tengcongensis (strain DSM 15242 / JCM 11007 / NBRC 100824 / MB4) (Thermoanaerobacter tengcongensis).